A 159-amino-acid chain; its full sequence is Cyclic pyranopterin monophosphate synthase (159 aa).

Substrate contacts are provided by residues 76–78 (LCH) and 114–115 (ME). Residue Asp-129 is part of the active site.

It belongs to the MoaC family. As to quaternary structure, homohexamer; trimer of dimers.

It catalyses the reaction (8S)-3',8-cyclo-7,8-dihydroguanosine 5'-triphosphate = cyclic pyranopterin phosphate + diphosphate. Its pathway is cofactor biosynthesis; molybdopterin biosynthesis. In terms of biological role, catalyzes the conversion of (8S)-3',8-cyclo-7,8-dihydroguanosine 5'-triphosphate to cyclic pyranopterin monophosphate (cPMP). The polypeptide is Cyclic pyranopterin monophosphate synthase (Clostridium botulinum (strain Alaska E43 / Type E3)).